The sequence spans 245 residues: 1-(5-phosphoribosyl)-5-[(5-phosphoribosylamino)methylideneamino] imidazole-4-carboxamide isomerase (245 aa).

D8 (proton acceptor) is an active-site residue. D129 serves as the catalytic Proton donor.

The protein belongs to the HisA/HisF family.

Its subcellular location is the cytoplasm. The catalysed reaction is 1-(5-phospho-beta-D-ribosyl)-5-[(5-phospho-beta-D-ribosylamino)methylideneamino]imidazole-4-carboxamide = 5-[(5-phospho-1-deoxy-D-ribulos-1-ylimino)methylamino]-1-(5-phospho-beta-D-ribosyl)imidazole-4-carboxamide. It functions in the pathway amino-acid biosynthesis; L-histidine biosynthesis; L-histidine from 5-phospho-alpha-D-ribose 1-diphosphate: step 4/9. This chain is 1-(5-phosphoribosyl)-5-[(5-phosphoribosylamino)methylideneamino] imidazole-4-carboxamide isomerase, found in Sinorhizobium fredii (strain NBRC 101917 / NGR234).